The primary structure comprises 277 residues: NAD kinase (277 aa).

Residue D67 is the Proton acceptor of the active site. Residues 67–68 (DG), R72, 137–138 (NE), K148, R165, D167, 178–183 (TGYAMS), L202, and Q236 contribute to the NAD(+) site.

This sequence belongs to the NAD kinase family. Requires a divalent metal cation as cofactor.

The protein localises to the cytoplasm. The enzyme catalyses NAD(+) + ATP = ADP + NADP(+) + H(+). Functionally, involved in the regulation of the intracellular balance of NAD and NADP, and is a key enzyme in the biosynthesis of NADP. Catalyzes specifically the phosphorylation on 2'-hydroxyl of the adenosine moiety of NAD to yield NADP. In Pyrococcus furiosus (strain ATCC 43587 / DSM 3638 / JCM 8422 / Vc1), this protein is NAD kinase.